The following is a 1744-amino-acid chain: DNA-directed RNA polymerase I subunit RPA1 (1744 aa).

Positions 56, 69, and 72 each coordinate Zn(2+). The Mg(2+) site is built by Asp597, Asp599, and Asp601. The bridging helix stretch occupies residues 953–965 (PAEYTIHAMAGRD). A disordered region spans residues 1333–1484 (VPREKESGDG…RDGTDWGGTS (152 aa)). 2 stretches are compositionally biased toward gly residues: residues 1341-1354 (DGSGNTGGMKGGSG) and 1366-1376 (DDGGGPLGGTF). A compositionally biased stretch (basic and acidic residues) spans 1464-1478 (RDAEDGGEMQDRDGT).

It belongs to the RNA polymerase beta' chain family. In terms of assembly, component of the RNA polymerase I (Pol I) complex consisting of at least 13 subunits. Post-translationally, phosphorylated.

Its subcellular location is the nucleus. It localises to the nucleolus. It carries out the reaction RNA(n) + a ribonucleoside 5'-triphosphate = RNA(n+1) + diphosphate. DNA-dependent RNA polymerase catalyzes the transcription of DNA into RNA using the four ribonucleoside triphosphates as substrates. Largest and catalytic core component of RNA polymerase I which synthesizes ribosomal RNA precursors. Forms the polymerase active center together with the second largest subunit. A single stranded DNA template strand of the promoter is positioned within the central active site cleft of Pol I. A bridging helix emanates from RPA1 and crosses the cleft near the catalytic site and is thought to promote translocation of Pol I by acting as a ratchet that moves the RNA-DNA hybrid through the active site by switching from straight to bent conformations at each step of nucleotide addition. The sequence is that of DNA-directed RNA polymerase I subunit RPA1 (TRP11) from Trypanosoma brucei brucei.